The chain runs to 732 residues: Catalase-peroxidase (732 aa).

The tryptophyl-tyrosyl-methioninium (Trp-Tyr) (with M-246) cross-link spans 97 to 220; it reads WHSAGTYRTS…LAAVQMGLIY (124 aa). Histidine 98 functions as the Proton acceptor in the catalytic mechanism. Positions 220-246 form a cross-link, tryptophyl-tyrosyl-methioninium (Tyr-Met) (with W-97); that stretch reads YVNPEGPDGNPDPVAAGRDIRETFARM. Histidine 261 is a heme b binding site.

Belongs to the peroxidase family. Peroxidase/catalase subfamily. As to quaternary structure, homodimer or homotetramer. Heme b is required as a cofactor. Formation of the three residue Trp-Tyr-Met cross-link is important for the catalase, but not the peroxidase activity of the enzyme.

It carries out the reaction H2O2 + AH2 = A + 2 H2O. It catalyses the reaction 2 H2O2 = O2 + 2 H2O. Functionally, bifunctional enzyme with both catalase and broad-spectrum peroxidase activity. The polypeptide is Catalase-peroxidase (Pelodictyon phaeoclathratiforme (strain DSM 5477 / BU-1)).